A 310-amino-acid chain; its full sequence is Deoxyribonuclease gamma (310 aa).

The N-terminal stretch at 1–25 is a signal peptide; the sequence is MSLHPASPRLASLLLFILALHDTLA. A Bipartite nuclear localization signal motif is present at residues 40–56; sequence KKENHEAMDIIVKIIKR. Active-site residues include glutamate 105 and histidine 160. Cysteine 199 and cysteine 236 are disulfide-bonded. Positions 289–310 are not required for free DNA-nuclease activity but required for activity towards liposome-coated DNA; it reads SRAFTNNRKSVSLKKRKKGNRS. Residues 301–307 carry the Nuclear localization signal motif; sequence LKKRKKG.

It belongs to the DNase I family. Ca(2+) serves as cofactor. Mg(2+) is required as a cofactor. In terms of processing, poly-ADP-ribosylated by PARP1. ADP-ribosylation negatively regulates enzymatic activity during apoptosis. In terms of tissue distribution, expressed at high levels in liver, spleen and testes. Expressed at lower levels in heart, lungs, skeletal muscle and kidney. Not expressed in brain. Predominantly expressed in macrophages; at protein level. Secreted by mononuclear phagocytes.

The protein resides in the nucleus. It is found in the endoplasmic reticulum. Its subcellular location is the secreted. Inhibited by zinc. Inhibited by heparin and proteolysis by plasmin. Its function is as follows. Has DNA hydrolytic activity. Is capable of both single- and double-stranded DNA cleavage, producing DNA fragments with 3'-OH ends. Can cleave chromatin to nucleosomal units and cleaves nucleosomal and liposome-coated DNA. Acts in internucleosomal DNA fragmentation (INDF) during apoptosis and necrosis. The role in apoptosis includes myogenic and neuronal differentiation, and BCR-mediated clonal deletion of self-reactive B cells. Is active on chromatin in apoptotic cell-derived membrane-coated microparticles and thus suppresses anti-DNA autoimmunity. Together with DNASE1, plays a key role in degrading neutrophil extracellular traps (NETs). NETs are mainly composed of DNA fibers and are released by neutrophils to bind pathogens during inflammation. Degradation of intravascular NETs by DNASE1 and DNASE1L3 is required to prevent formation of clots that obstruct blood vessels and cause organ damage following inflammation. The protein is Deoxyribonuclease gamma of Mus musculus (Mouse).